Consider the following 579-residue polypeptide: Probable methyl-accepting chemotaxis protein BT9727_0355 (579 aa).

Residues 1-13 (MKKYWHKLSFLQK) lie on the Cytoplasmic side of the membrane. A helical transmembrane segment spans residues 14 to 34 (NVLLTVLVILTLVGTMGALSF). The Extracellular portion of the chain corresponds to 35-198 (NMFQNSMMSI…ASIVPSTKEK (164 aa)). A helical transmembrane segment spans residues 199–219 (FIIQGLMFICISVLIATVIQF). Over 220–579 (LIVRNALAPL…LQELIGEFKS (360 aa)) the chain is Cytoplasmic. One can recognise an HAMP domain in the interval 223-274 (RNALAPLRDLREGLRRVGEGDLNIKLEERSDDIGIINSYFNNTIEKFKGIID). Glutamate 289 is modified (glutamate methyl ester (Glu)). Residues 293–529 (STKENSMAVQ…NIVRVVNELS (237 aa)) enclose the Methyl-accepting transducer domain. A Glutamate methyl ester (Glu) modification is found at glutamate 548.

This sequence belongs to the methyl-accepting chemotaxis (MCP) protein family.

It localises to the cell membrane. Functionally, chemotactic-signal transducers respond to changes in the concentration of attractants and repellents in the environment, transduce a signal from the outside to the inside of the cell, and facilitate sensory adaptation through the variation of the level of methylation. The sequence is that of Probable methyl-accepting chemotaxis protein BT9727_0355 from Bacillus thuringiensis subsp. konkukian (strain 97-27).